Consider the following 140-residue polypeptide: Large-conductance mechanosensitive channel (140 aa).

The next 2 helical transmembrane spans lie at V16 to L36 and I84 to I104.

It belongs to the MscL family. As to quaternary structure, homopentamer.

The protein localises to the cell inner membrane. Its function is as follows. Channel that opens in response to stretch forces in the membrane lipid bilayer. May participate in the regulation of osmotic pressure changes within the cell. This Xanthomonas oryzae pv. oryzae (strain MAFF 311018) protein is Large-conductance mechanosensitive channel.